The chain runs to 773 residues: Polyribonucleotide nucleotidyltransferase (773 aa).

Asp532 and Asp538 together coordinate Mg(2+). In terms of domain architecture, KH spans 598–657 (PRVITIKVPVDKIGEVIGPKGKVINAITEETGAQISIEDDGTVFVGATDGLSAQAAINKI). Positions 669-738 (GERFLGTVVK…KRGKISLVLV (70 aa)) constitute an S1 motif domain. The tract at residues 749 to 773 (APADAGAAQEFGSGTAPADAATASS) is disordered.

Belongs to the polyribonucleotide nucleotidyltransferase family. It depends on Mg(2+) as a cofactor.

Its subcellular location is the cytoplasm. It carries out the reaction RNA(n+1) + phosphate = RNA(n) + a ribonucleoside 5'-diphosphate. Involved in mRNA degradation. Catalyzes the phosphorolysis of single-stranded polyribonucleotides processively in the 3'- to 5'-direction. This is Polyribonucleotide nucleotidyltransferase from Mycobacterium leprae (strain Br4923).